Here is a 382-residue protein sequence, read N- to C-terminus: Prolargin (382 aa).

The N-terminal stretch at 1-20 (MRSPLCWLLPLLILASVAQG) is a signal peptide. The interval 19 to 66 (QGQPTRRPRPGTGPGRRPRPRPRPTPSFPQPDEPAEPTDLPPPLPPGP) is disordered. Pro residues-rich tracts occupy residues 41–50 (RPTPSFPQPD) and 57–66 (DLPPPLPPGP). LRR repeat units lie at residues 95 to 114 (RKVP…NNFI), 115 to 138 (TELP…NNRI), 139 to 162 (RKID…KNQL), 163 to 183 (EEVP…QNHI), 184 to 207 (SRIP…HNRL), 208 to 233 (SDGV…HNIL), 234 to 254 (RKMP…SNKI), 255 to 278 (ETIP…YNKL), 279 to 303 (TDRG…HNRI), 304 to 323 (SSVP…NNSI), 324 to 362 (EKIN…GNYL), and 363 to 382 (KPPI…SVVI). Residue Asn-124 is glycosylated (N-linked (GlcNAc...) asparagine). N-linked (GlcNAc...) asparagine glycosylation is found at Asn-289, Asn-320, and Asn-327. Cys-332 and Cys-373 are disulfide-bonded.

The protein belongs to the small leucine-rich proteoglycan (SLRP) family. SLRP class II subfamily. In terms of assembly, binds the basement membrane heparan sulfate proteoglycan perlecan and triple helical collagens type I and type II. Post-translationally, glycosylated; contains heparan sulfate. As to expression, connective tissue.

The protein localises to the secreted. It is found in the extracellular space. It localises to the extracellular matrix. Functionally, may anchor basement membranes to the underlying connective tissue. This Homo sapiens (Human) protein is Prolargin (PRELP).